The sequence spans 349 residues: MDIKSALSRIVGHLDLSTEEMRDVMRQIMTGQCSEAQIGAFLMGMRMKSESIDEIVGAVSVMRELADKVELKSLDGVVDIVGTGGDGANIFNVSTASAFVIAAAGCTVAKHGNRAVSGKSGSADLLEAAGIYLNLTPVQVARCIDSLGIGFMFAQTHHSAMKHAAGPRRDLGLRTLFNMLGPLTNPAGVKHQVVGVFTQALCRPLAEVLQRLGSKHVLVVHSKDGLDEFSLAAPTFVAELKNDQITEYWVEPEDLGMKSQSLHGLAVEGPQASLELIRDALGRRKTENGQKAAEMIVLNAGAALYAADHAMTLAQGVELAHDVLHTGLAWEKLQELGAFTAVFKVENEA.

Residues Gly82, 85–86 (GD), 92–95 (NVST), 110–118 (KHGNRAVSG), and Ser122 contribute to the 5-phospho-alpha-D-ribose 1-diphosphate site. Anthranilate is bound at residue Gly82. Ser94 provides a ligand contact to Mg(2+). Position 113 (Asn113) interacts with anthranilate. Arg168 contributes to the anthranilate binding site. Residues Asp227 and Glu228 each contribute to the Mg(2+) site.

Belongs to the anthranilate phosphoribosyltransferase family. In terms of assembly, homodimer. The cofactor is Mg(2+).

It carries out the reaction N-(5-phospho-beta-D-ribosyl)anthranilate + diphosphate = 5-phospho-alpha-D-ribose 1-diphosphate + anthranilate. It participates in amino-acid biosynthesis; L-tryptophan biosynthesis; L-tryptophan from chorismate: step 2/5. Its function is as follows. Catalyzes the transfer of the phosphoribosyl group of 5-phosphorylribose-1-pyrophosphate (PRPP) to anthranilate to yield N-(5'-phosphoribosyl)-anthranilate (PRA). The chain is Anthranilate phosphoribosyltransferase from Pseudomonas entomophila (strain L48).